We begin with the raw amino-acid sequence, 555 residues long: CTP synthase (555 aa).

An amidoligase domain region spans residues 1–267 (MTKFVFVTGG…AQQVLKFMHL (267 aa)). S13 serves as a coordination point for CTP. S13 contacts UTP. ATP-binding positions include 14 to 19 (SIGKGI) and D71. Mg(2+) is bound by residues D71 and E141. CTP is bound by residues 148–150 (DIE), 188–193 (KTKPTQ), and K224. Residues 188–193 (KTKPTQ) and K224 contribute to the UTP site. Position 242 (A242) interacts with ATP. Positions 299–535 (YVQLSDAYLS…VGACLADNGN (237 aa)) constitute a Glutamine amidotransferase type-1 domain. Residue G354 coordinates L-glutamine. C381 acts as the Nucleophile; for glutamine hydrolysis in catalysis. Residues 382-385 (LGMQ), E405, and R463 each bind L-glutamine. Catalysis depends on residues H508 and E510. The disordered stretch occupies residues 536 to 555 (NANHHDSTPAEPLVSEPLSS).

It belongs to the CTP synthase family. As to quaternary structure, homotetramer.

It carries out the reaction UTP + L-glutamine + ATP + H2O = CTP + L-glutamate + ADP + phosphate + 2 H(+). It catalyses the reaction L-glutamine + H2O = L-glutamate + NH4(+). The catalysed reaction is UTP + NH4(+) + ATP = CTP + ADP + phosphate + 2 H(+). It participates in pyrimidine metabolism; CTP biosynthesis via de novo pathway; CTP from UDP: step 2/2. Its activity is regulated as follows. Allosterically activated by GTP, when glutamine is the substrate; GTP has no effect on the reaction when ammonia is the substrate. The allosteric effector GTP functions by stabilizing the protein conformation that binds the tetrahedral intermediate(s) formed during glutamine hydrolysis. Inhibited by the product CTP, via allosteric rather than competitive inhibition. Its function is as follows. Catalyzes the ATP-dependent amination of UTP to CTP with either L-glutamine or ammonia as the source of nitrogen. Regulates intracellular CTP levels through interactions with the four ribonucleotide triphosphates. The protein is CTP synthase of Acaryochloris marina (strain MBIC 11017).